Here is a 185-residue protein sequence, read N- to C-terminus: Alkyl hydroperoxide reductase AhpD (185 aa).

Cysteine 132 (proton donor) is an active-site residue. A disulfide bridge links cysteine 132 with cysteine 135. Residue cysteine 135 is the Cysteine sulfenic acid (-SOH) intermediate of the active site.

It belongs to the AhpD family.

The enzyme catalyses N(6)-[(R)-dihydrolipoyl]-L-lysyl-[lipoyl-carrier protein] + a hydroperoxide = N(6)-[(R)-lipoyl]-L-lysyl-[lipoyl-carrier protein] + an alcohol + H2O. Functionally, antioxidant protein with alkyl hydroperoxidase activity. Required for the reduction of the AhpC active site cysteine residues and for the regeneration of the AhpC enzyme activity. The protein is Alkyl hydroperoxide reductase AhpD of Anaeromyxobacter sp. (strain Fw109-5).